The primary structure comprises 210 residues: Pyridoxine/pyridoxamine 5'-phosphate oxidase (210 aa).

Residues 7-10 (RQSY) and Lys-65 contribute to the substrate site. FMN contacts are provided by residues 60–65 (RIVLIK), 75–76 (YT), Arg-81, Lys-82, and Gln-104. 3 residues coordinate substrate: Tyr-122, Arg-126, and Ser-130. Residues 139-140 (QS) and Trp-182 contribute to the FMN site. 188–190 (RLH) lines the substrate pocket. FMN is bound at residue Arg-192.

Belongs to the pyridoxamine 5'-phosphate oxidase family. Homodimer. The cofactor is FMN.

It catalyses the reaction pyridoxamine 5'-phosphate + O2 + H2O = pyridoxal 5'-phosphate + H2O2 + NH4(+). The catalysed reaction is pyridoxine 5'-phosphate + O2 = pyridoxal 5'-phosphate + H2O2. It participates in cofactor metabolism; pyridoxal 5'-phosphate salvage; pyridoxal 5'-phosphate from pyridoxamine 5'-phosphate: step 1/1. Its pathway is cofactor metabolism; pyridoxal 5'-phosphate salvage; pyridoxal 5'-phosphate from pyridoxine 5'-phosphate: step 1/1. Catalyzes the oxidation of either pyridoxine 5'-phosphate (PNP) or pyridoxamine 5'-phosphate (PMP) into pyridoxal 5'-phosphate (PLP). This Bordetella petrii (strain ATCC BAA-461 / DSM 12804 / CCUG 43448) protein is Pyridoxine/pyridoxamine 5'-phosphate oxidase.